Here is a 130-residue protein sequence, read N- to C-terminus: Zinc finger A20 and AN1 domain-containing stress-associated protein 10 (130 aa).

An A20-type zinc finger spans residues 4–38; that stretch reads ETEALPCEGGCGLYGTRVNNNLCSLCYKKSVLQHS. Zn(2+) contacts are provided by Cys-10, Cys-14, Cys-26, Cys-29, Cys-71, Cys-74, Cys-85, Cys-87, Cys-92, His-95, His-101, and Cys-103. The segment at 65–111 adopts an AN1-type zinc-finger fold; it reads PVKKRRCGICKRKVGMLGFKCRCGHMFCGSHRYPEEHSCPFDYKQSG.

May be involved in environmental stress response. The protein is Zinc finger A20 and AN1 domain-containing stress-associated protein 10 (SAP10) of Arabidopsis thaliana (Mouse-ear cress).